Reading from the N-terminus, the 487-residue chain is Phenylalanine--tRNA ligase alpha subunit (487 aa).

Residues Thr319, 361–363, and Tyr401 each bind L-phenylalanine; that span reads QVE. Glu403 provides a ligand contact to Mg(2+). Phe427 contributes to the L-phenylalanine binding site.

The protein belongs to the class-II aminoacyl-tRNA synthetase family. Phe-tRNA synthetase alpha subunit type 2 subfamily. As to quaternary structure, tetramer of two alpha and two beta subunits. The cofactor is Mg(2+).

The protein localises to the cytoplasm. It catalyses the reaction tRNA(Phe) + L-phenylalanine + ATP = L-phenylalanyl-tRNA(Phe) + AMP + diphosphate + H(+). In Dictyostelium discoideum (Social amoeba), this protein is Phenylalanine--tRNA ligase alpha subunit (phesA).